A 341-amino-acid chain; its full sequence is MIKVAINGYGTIGKRVADAVAAQPDMEVIGVSKTSVSAEAYIAKERGYPLYIADLGKKPAFEKAGIEVAGDVEAMLKAADIVVDATPGGVGEKNRPIYEKLGKKAIFQGGEDHEVAGFSFNAHANYNEAENHQFARVVSCNSTGLVRIIHALDQAFGVARVRAVMVRRGADPDDVKRGPIDAIVLNPASIPSHHGPDVNTVLPHINIVTLAMIVPTTFMHMHSIQMDLKKETTREEVLKVFENHSRIGLVRKTMGIKSNAQLREYTQDLGRPRTDLWENGVFEESVSILDGKEFYCFQAIHQEADVVPENIDCIRALMGTVKDPQESIRMTNEALGLVAIG.

NAD(+) is bound by residues 11-12 (TI) and G110. 139 to 141 (SCN) contributes to the D-glyceraldehyde 3-phosphate binding site. C140 functions as the Nucleophile in the catalytic mechanism. R168 lines the NAD(+) pocket. D-glyceraldehyde 3-phosphate is bound at residue 194–195 (HG). Residue Q302 participates in NAD(+) binding.

Belongs to the glyceraldehyde-3-phosphate dehydrogenase family. In terms of assembly, homotetramer.

The protein localises to the cytoplasm. The enzyme catalyses D-glyceraldehyde 3-phosphate + phosphate + NADP(+) = (2R)-3-phospho-glyceroyl phosphate + NADPH + H(+). It catalyses the reaction D-glyceraldehyde 3-phosphate + phosphate + NAD(+) = (2R)-3-phospho-glyceroyl phosphate + NADH + H(+). It participates in carbohydrate degradation; glycolysis; pyruvate from D-glyceraldehyde 3-phosphate: step 1/5. This chain is Glyceraldehyde-3-phosphate dehydrogenase, found in Methanoculleus marisnigri (strain ATCC 35101 / DSM 1498 / JR1).